A 910-amino-acid polypeptide reads, in one-letter code: DNA mismatch repair protein MutS (910 aa).

A compositionally biased stretch (basic and acidic residues) spans 1 to 11 (MEAKVEEKEPE). The segment at 1 to 21 (MEAKVEEKEPEPVENAGPDAP) is disordered. 658–665 (GPNMGGKS) provides a ligand contact to ATP.

The protein belongs to the DNA mismatch repair MutS family.

This protein is involved in the repair of mismatches in DNA. It is possible that it carries out the mismatch recognition step. This protein has a weak ATPase activity. In Brucella canis (strain ATCC 23365 / NCTC 10854 / RM-666), this protein is DNA mismatch repair protein MutS.